The primary structure comprises 692 residues: Elongation factor G (692 aa).

The 275-residue stretch at 8–282 (PNTRNIGIMA…NVVAYLPSPV (275 aa)) folds into the tr-type G domain. GTP contacts are provided by residues 17–24 (AHIDAGKT), 81–85 (DTPGH), and 135–138 (NKMD).

It belongs to the TRAFAC class translation factor GTPase superfamily. Classic translation factor GTPase family. EF-G/EF-2 subfamily.

The protein localises to the cytoplasm. Functionally, catalyzes the GTP-dependent ribosomal translocation step during translation elongation. During this step, the ribosome changes from the pre-translocational (PRE) to the post-translocational (POST) state as the newly formed A-site-bound peptidyl-tRNA and P-site-bound deacylated tRNA move to the P and E sites, respectively. Catalyzes the coordinated movement of the two tRNA molecules, the mRNA and conformational changes in the ribosome. The chain is Elongation factor G from Brevibacillus brevis (strain 47 / JCM 6285 / NBRC 100599).